A 483-amino-acid polypeptide reads, in one-letter code: Cobyric acid synthase (483 aa).

The GATase cobBQ-type domain occupies 244–430; that stretch reads WLRVIAPVLP…LHGLFDHAEA (187 aa). Cys325 serves as the catalytic Nucleophile. His422 is a catalytic residue.

Belongs to the CobB/CobQ family. CobQ subfamily.

Its pathway is cofactor biosynthesis; adenosylcobalamin biosynthesis. In terms of biological role, catalyzes amidations at positions B, D, E, and G on adenosylcobyrinic A,C-diamide. NH(2) groups are provided by glutamine, and one molecule of ATP is hydrogenolyzed for each amidation. The protein is Cobyric acid synthase of Methylobacillus flagellatus (strain ATCC 51484 / DSM 6875 / VKM B-1610 / KT).